Here is a 382-residue protein sequence, read N- to C-terminus: Mannitol-1-phosphate 5-dehydrogenase (382 aa).

An NAD(+)-binding site is contributed by 3–14 (ALHFGAGNIGRG).

The protein belongs to the mannitol dehydrogenase family.

The enzyme catalyses D-mannitol 1-phosphate + NAD(+) = beta-D-fructose 6-phosphate + NADH + H(+). The chain is Mannitol-1-phosphate 5-dehydrogenase from Pectobacterium atrosepticum (strain SCRI 1043 / ATCC BAA-672) (Erwinia carotovora subsp. atroseptica).